The chain runs to 194 residues: SRP-independent targeting protein 3 homolog (194 aa).

Transmembrane regions (helical) follow at residues 43 to 63 (ILYATVNIVQIGIFLYTKIII) and 110 to 130 (LVTIATTLFMHLYMGYAPPLL).

Belongs to the PHO88 family.

The protein localises to the endoplasmic reticulum membrane. May function in a SRP (signal recognition particle) and GET (guided entry of tail-anchored proteins) independent pathway for targeting a broad range of substrate proteins to the endoplasmic reticulum. Involved in inorganic phosphate uptake. Also involved in telomere length regulation and maintenance. This Schizosaccharomyces pombe (strain 972 / ATCC 24843) (Fission yeast) protein is SRP-independent targeting protein 3 homolog.